A 401-amino-acid polypeptide reads, in one-letter code: MASAISLSLLNGATPLKSNSLHKSRLTPLHLRTISCSRLSYSPSSREISLKTQSTVPISCRRSRFDFVPRCGISSNDLPTEKKKSFGEWVEFVGEAVSTAFPIWVSLGCLLGLMRPSTFNWVTPNWTIVGLTITMLGMGMTLTLDDLRGALSMPKELFAGFLLQYSVMPLSAFFVSKLLNLPPHYAAGLILVGCCPGGTASNIVTYIARGNVALSVLMTAASTVSAVIMTPLLTAKLAKQYITVDALGLLMSTLQVVLLPVLAGAFLNQYFKKLVKFVSPVMPPIAVGTVAILCGYAIGQNASAILMSGKQVVLASCLLHISGFLFGYLFSRILGIDVASSRTISIEVGMQNSVLGVVLATQHFGNPLTAVPCAVSSVCHSILGSVLAGIWRRSAPKQLED.

Residues 1-70 (MASAISLSLL…RRSRFDFVPR (70 aa)) constitute a chloroplast transit peptide. The next 9 membrane-spanning stretches (helical) occupy residues 92–112 (FVGE…CLLG), 122–142 (VTPN…GMTL), 156–176 (ELFA…FFVS), 187–207 (AGLI…VTYI), 212–232 (VALS…MTPL), 247–267 (LGLL…GAFL), 278–298 (VSPV…GYAI), 311–331 (QVVL…YLFS), and 371–391 (VPCA…AGIW).

It belongs to the bile acid:sodium symporter (BASS) (TC 2.A.28) family.

It is found in the membrane. Its subcellular location is the plastid. The protein resides in the chloroplast envelope. May function as sodium-coupled metabolite transporter across the chloroplast envelope. This Arabidopsis thaliana (Mouse-ear cress) protein is Probable sodium/metabolite cotransporter BASS1, chloroplastic (BASS1).